The primary structure comprises 125 residues: Transposase C from transposon PsiTn554 (125 aa).

The protein is Transposase C from transposon PsiTn554 (tnpC) of Staphylococcus aureus.